The sequence spans 502 residues: Glucose-6-phosphate isomerase (502 aa).

Glu331 acts as the Proton donor in catalysis. Active-site residues include His362 and Lys471.

It belongs to the GPI family.

The protein resides in the cytoplasm. It carries out the reaction alpha-D-glucose 6-phosphate = beta-D-fructose 6-phosphate. It functions in the pathway carbohydrate biosynthesis; gluconeogenesis. The protein operates within carbohydrate degradation; glycolysis; D-glyceraldehyde 3-phosphate and glycerone phosphate from D-glucose: step 2/4. Its function is as follows. Catalyzes the reversible isomerization of glucose-6-phosphate to fructose-6-phosphate. This chain is Glucose-6-phosphate isomerase, found in Xylella fastidiosa (strain 9a5c).